A 167-amino-acid chain; its full sequence is Lipoprotein signal peptidase (167 aa).

4 helical membrane passes run 5–25, 42–62, 70–90, and 102–122; these read ICST…LDLG, LIPY…SFLA, WFFA…MYRA, and ALII…GFVI. Catalysis depends on residues D123 and D141. The chain crosses the membrane as a helical span at residues 137–157; that stretch reads FNIADMAICIGAGLVIIDSFL.

Belongs to the peptidase A8 family.

It is found in the cell inner membrane. It carries out the reaction Release of signal peptides from bacterial membrane prolipoproteins. Hydrolyzes -Xaa-Yaa-Zaa-|-(S,diacylglyceryl)Cys-, in which Xaa is hydrophobic (preferably Leu), and Yaa (Ala or Ser) and Zaa (Gly or Ala) have small, neutral side chains.. The protein operates within protein modification; lipoprotein biosynthesis (signal peptide cleavage). Functionally, this protein specifically catalyzes the removal of signal peptides from prolipoproteins. This is Lipoprotein signal peptidase from Photorhabdus laumondii subsp. laumondii (strain DSM 15139 / CIP 105565 / TT01) (Photorhabdus luminescens subsp. laumondii).